Here is a 233-residue protein sequence, read N- to C-terminus: MLNTPRICVVVIGKTLEEFLSQLEAAQTAVDFVELRIDYLEQINPNWVRIIKNHTHKKAILCCRARADGGKFLGTPEAQQEILQAGNDLGFDYLDIDLPVANKISIHEKKAKIIISYHNFLHTPPITELNFLLENMRLFNPDVFKFATKSEQYEDVKTLFKLLINKKNNENMIVLGMGEQGKIIRLLSPLLGGYLTFSSINGAISAPGQIDFKTMQDFYQRFYKISSPLKGED.

3-dehydroquinate contacts are provided by residues 34–36 (ELR) and R64. The active-site Proton donor/acceptor is the H118. Residue K145 is the Schiff-base intermediate with substrate of the active site. Residues R185, S205, and Q209 each contribute to the 3-dehydroquinate site.

Belongs to the type-I 3-dehydroquinase family. In terms of assembly, homodimer.

It catalyses the reaction 3-dehydroquinate = 3-dehydroshikimate + H2O. It functions in the pathway metabolic intermediate biosynthesis; chorismate biosynthesis; chorismate from D-erythrose 4-phosphate and phosphoenolpyruvate: step 3/7. Involved in the third step of the chorismate pathway, which leads to the biosynthesis of aromatic amino acids. Catalyzes the cis-dehydration of 3-dehydroquinate (DHQ) and introduces the first double bond of the aromatic ring to yield 3-dehydroshikimate. This chain is 3-dehydroquinate dehydratase, found in Coxiella burnetii (strain CbuG_Q212) (Coxiella burnetii (strain Q212)).